Reading from the N-terminus, the 139-residue chain is MANARSGVAVNDECMLKFGELQSKRLHRFITFKMDDKFKEIVVDQVGDRATSYDDFTNSLPENDCRYAIYDFDFVTAEDVQKSRIFYILWSPSSAKVKSKMLYASSNQKFKSGLNGIQVELQATDASEISLDEIKDRAR.

The ADF-H domain maps to glycine 7–arginine 139.

Belongs to the actin-binding proteins ADF family. Expressed in all tissues except pollen.

Its subcellular location is the cytoplasm. Its function is as follows. Actin-depolymerizing protein. Severs actin filaments (F-actin) and binds to actin monomers. This Zea mays (Maize) protein is Actin-depolymerizing factor 3 (ADF3).